The sequence spans 214 residues: Pyrrolidone-carboxylate peptidase (214 aa).

Catalysis depends on residues Glu-80, Cys-143, and His-166.

It belongs to the peptidase C15 family. As to quaternary structure, homotetramer.

Its subcellular location is the cytoplasm. It carries out the reaction Release of an N-terminal pyroglutamyl group from a polypeptide, the second amino acid generally not being Pro.. In terms of biological role, removes 5-oxoproline from various penultimate amino acid residues except L-proline. The sequence is that of Pyrrolidone-carboxylate peptidase from Escherichia fergusonii (strain ATCC 35469 / DSM 13698 / CCUG 18766 / IAM 14443 / JCM 21226 / LMG 7866 / NBRC 102419 / NCTC 12128 / CDC 0568-73).